The following is a 191-amino-acid chain: UPF0312 protein Sbal_3041 (191 aa).

Residues methionine 1–alanine 22 form the signal peptide.

Belongs to the UPF0312 family. Type 1 subfamily.

The protein localises to the periplasm. The chain is UPF0312 protein Sbal_3041 from Shewanella baltica (strain OS155 / ATCC BAA-1091).